Consider the following 368-residue polypeptide: Phosphate acyltransferase (368 aa).

The tract at residues 337–368 is disordered; sequence LGDGEHDAGGAGQASPAAGHHAEPSAAQSSKA.

It belongs to the PlsX family. As to quaternary structure, homodimer. Probably interacts with PlsY.

It is found in the cytoplasm. The catalysed reaction is a fatty acyl-[ACP] + phosphate = an acyl phosphate + holo-[ACP]. It functions in the pathway lipid metabolism; phospholipid metabolism. Functionally, catalyzes the reversible formation of acyl-phosphate (acyl-PO(4)) from acyl-[acyl-carrier-protein] (acyl-ACP). This enzyme utilizes acyl-ACP as fatty acyl donor, but not acyl-CoA. The polypeptide is Phosphate acyltransferase (Burkholderia orbicola (strain MC0-3)).